The chain runs to 397 residues: 3-ketoacyl-CoA thiolase, mitochondrial (397 aa).

A mitochondrion; not cleaved-targeting transit peptide spans 1–16 (MALLRGVFIVAAKRTP). An N6-acetyllysine; alternate modification is found at Lys-25. Position 25 is an N6-succinyllysine; alternate (Lys-25). Position 28 is a phosphoserine (Ser-28). Lys-45 bears the N6-succinyllysine mark. Cys-92 serves as the catalytic Acyl-thioester intermediate. A Phosphothreonine modification is found at Thr-119. Ser-121 carries the post-translational modification Phosphoserine. Residue Tyr-127 is modified to Phosphotyrosine. Thr-136 carries the phosphothreonine modification. Residues Lys-137, Lys-143, Lys-158, Lys-171, Lys-191, and Lys-209 each carry the N6-acetyllysine; alternate modification. N6-succinyllysine; alternate is present on residues Lys-137, Lys-143, Lys-158, Lys-171, Lys-191, and Lys-209. 3 positions are modified to N6-succinyllysine: Lys-211, Lys-212, and Lys-214. CoA contacts are provided by Arg-224 and Thr-227. An N6-acetyllysine; alternate modification is found at Lys-234. Lys-234 carries the N6-succinyllysine; alternate modification. Position 240 is an N6-succinyllysine (Lys-240). N6-acetyllysine is present on Lys-241. Ser-251 contacts CoA. Residues Lys-269 and Lys-270 each carry the N6-acetyllysine modification. Position 305 is an N6-acetyllysine; alternate (Lys-305). Position 305 is an N6-succinyllysine; alternate (Lys-305). A Phosphoserine modification is found at Ser-310. An N6-acetyllysine; alternate modification is found at Lys-312. Lys-312 carries the N6-succinyllysine; alternate modification. N6-acetyllysine is present on Lys-340. A Phosphoserine modification is found at Ser-344. Lys-375 bears the N6-acetyllysine mark. Catalysis depends on Cys-382, which acts as the Proton donor/acceptor.

This sequence belongs to the thiolase-like superfamily. Thiolase family. As to quaternary structure, homotetramer. Interacts with BNIP3.

The protein resides in the mitochondrion. The enzyme catalyses an acyl-CoA + acetyl-CoA = a 3-oxoacyl-CoA + CoA. It catalyses the reaction 2 acetyl-CoA = acetoacetyl-CoA + CoA. The catalysed reaction is acetyl-CoA + H2O = acetate + CoA + H(+). It carries out the reaction propanoyl-CoA + H2O = propanoate + CoA + H(+). The enzyme catalyses butanoyl-CoA + H2O = butanoate + CoA + H(+). It catalyses the reaction hexanoyl-CoA + H2O = hexanoate + CoA + H(+). The catalysed reaction is octanoyl-CoA + H2O = octanoate + CoA + H(+). It carries out the reaction decanoyl-CoA + H2O = decanoate + CoA + H(+). The enzyme catalyses dodecanoyl-CoA + H2O = dodecanoate + CoA + H(+). It catalyses the reaction tetradecanoyl-CoA + H2O = tetradecanoate + CoA + H(+). The catalysed reaction is hexadecanoyl-CoA + H2O = hexadecanoate + CoA + H(+). It functions in the pathway lipid metabolism; fatty acid beta-oxidation. Its function is as follows. In the production of energy from fats, this is one of the enzymes that catalyzes the last step of the mitochondrial beta-oxidation pathway, an aerobic process breaking down fatty acids into acetyl-CoA. Using free coenzyme A/CoA, catalyzes the thiolytic cleavage of medium- to long-chain unbranched 3-oxoacyl-CoAs into acetyl-CoA and a fatty acyl-CoA shortened by two carbon atoms. Also catalyzes the condensation of two acetyl-CoA molecules into acetoacetyl-CoA and could be involved in the production of ketone bodies. Also displays hydrolase activity on various fatty acyl-CoAs. Thereby, could be responsible for the production of acetate in a side reaction to beta-oxidation. Abolishes BNIP3-mediated apoptosis and mitochondrial damage. This is 3-ketoacyl-CoA thiolase, mitochondrial (Acaa2) from Mus musculus (Mouse).